The primary structure comprises 167 residues: MVLMVVFSVMFLISLIAVASNPSPYFAAFGLMVGAGVGCGMLMQCGMTFLSMILFLIYLGGMLVVFAYSPALAAEPYPNAWGSWEVFSYVLVYMFLVIVAWVAFVGDMELFDDVEEYFGAMRRYVGVAEVYNAGGYMLFIAGWVLLMALLVVLELTRGYSRGCLRAV.

5 helical membrane-spanning segments follow: residues methionine 1 to asparagine 21, serine 23 to methionine 43, methionine 47 to alanine 67, valine 86 to glycine 106, and alanine 133 to leucine 153.

It belongs to the complex I subunit 6 family.

The protein localises to the mitochondrion membrane. It carries out the reaction a ubiquinone + NADH + 5 H(+)(in) = a ubiquinol + NAD(+) + 4 H(+)(out). Its function is as follows. Core subunit of the mitochondrial membrane respiratory chain NADH dehydrogenase (Complex I) that is believed to belong to the minimal assembly required for catalysis. Complex I functions in the transfer of electrons from NADH to the respiratory chain. The immediate electron acceptor for the enzyme is believed to be ubiquinone. The sequence is that of NADH-ubiquinone oxidoreductase chain 6 (MT-ND6) from Polypterus ornatipinnis (Ornate bichir).